A 200-amino-acid polypeptide reads, in one-letter code: Dephospho-CoA kinase (200 aa).

Residues Arg-3–Asn-200 form the DPCK domain. Gly-11 to Thr-16 serves as a coordination point for ATP.

This sequence belongs to the CoaE family.

The protein resides in the cytoplasm. It carries out the reaction 3'-dephospho-CoA + ATP = ADP + CoA + H(+). Its pathway is cofactor biosynthesis; coenzyme A biosynthesis; CoA from (R)-pantothenate: step 5/5. Catalyzes the phosphorylation of the 3'-hydroxyl group of dephosphocoenzyme A to form coenzyme A. This chain is Dephospho-CoA kinase, found in Corynebacterium glutamicum (strain ATCC 13032 / DSM 20300 / JCM 1318 / BCRC 11384 / CCUG 27702 / LMG 3730 / NBRC 12168 / NCIMB 10025 / NRRL B-2784 / 534).